A 91-amino-acid polypeptide reads, in one-letter code: Insertion element IS1 7 protein InsA (91 aa).

The protein belongs to the IS1 elements InsA family.

Functionally, absolutely required for transposition of IS1. The sequence is that of Insertion element IS1 7 protein InsA (insA7) from Escherichia coli (strain K12).